The following is a 394-amino-acid chain: GDNF family receptor alpha-like (394 aa).

Residues 1-19 (MLVFIFLAVRLSSENESSS) form the signal peptide. Topologically, residues 20 to 350 (QTNDCAYFMR…LTGFNSPFSG (331 aa)) are extracellular. N-linked (GlcNAc...) asparagine glycosylation is found at N65, N101, and N115. 11 cysteine pairs are disulfide-bonded: C132-C190, C139-C145, C156-C168, C163-C211, C192-C199, C221-C292, C228-C234, C245-C276, C253-C259, C270-C317, and C294-C305. A required for interaction with GDF15 region spans residues 150–229 (ALYLKACTAN…TCLSVIHTCR (80 aa)). A helical membrane pass occupies residues 351–371 (ELIYVVVCMVVTSGILSLVML). The Cytoplasmic segment spans residues 372 to 394 (KLRIPSKKRDPAPIEIAGAVIIQ).

This sequence belongs to the GDNFR family. In terms of assembly, interacts (via the extracellular domain) with GDF15 and RET; receptor of GDF15, mediates cellular signaling through interaction with RET after GDF15-binding. Interaction with RET requires previous GDF15-binding. In terms of processing, cleaved and inactivated by MMP14, inhibiting the GDF15-GFRAL aversive response. In terms of tissue distribution, expressed in the brainstem, restricted to cells in the area postrema and the immediately adjacent region of the nucleus tractus solitarius. Detected at low levels in testis.

The protein localises to the cell membrane. Functionally, brainstem-restricted receptor for GDF15 hormone, which triggers an aversive response, characterized by nausea, vomiting, and/or loss of appetite in response to various stresses. The aversive response is both required to reduce continuing exposure to those stresses at the time of exposure and to promote avoidance behavior in the future. The GDF15-GFRAL aversive response is triggered by stresses, such as anticancer drugs (camptothecin or cisplatin), cancers or drugs such as metformin. Upon interaction with its ligand, GDF15, mediates the GDF15-induced autophosphorylation and activation of the RET tyrosine kinase receptor, leading to activation of MAPK- and AKT- signaling pathways. Ligand-binding activates GFRAL-expressing neurons localized in the area postrema and nucleus tractus solitarius of the brainstem. The GDF15-GFRAL signal induces expression of genes involved in metabolism, such as lipid metabolism in adipose tissues. The polypeptide is GDNF family receptor alpha-like (Rattus norvegicus (Rat)).